The chain runs to 308 residues: NADH-cytochrome b5 reductase 1 (308 aa).

A helical membrane pass occupies residues 29–49 (VASSPAFLVAAAAIVIAAAFY). Positions 64–167 (SIWKEFPLQK…KGPKGNFKYT (104 aa)) constitute an FAD-binding FR-type domain. Residues 147-162 (ASLK…GPKG) and 173-205 (HLGM…NITL) each bind FAD.

The protein belongs to the flavoprotein pyridine nucleotide cytochrome reductase family. As to quaternary structure, monomer. Component of the 2-(3-amino-3-carboxypropyl)histidine synthase complex composed of DPH1, DPH2, DPH3 and a NADH-dependent reductase, predominantly MCR1.1. It depends on FAD as a cofactor.

It is found in the mitochondrion outer membrane. The catalysed reaction is 2 Fe(III)-[cytochrome b5] + NADH = 2 Fe(II)-[cytochrome b5] + NAD(+) + H(+). The enzyme catalyses 2 Fe(3+)-[Dph3] + NADH = 2 Fe(2+)-[Dph3] + NAD(+) + H(+). The protein operates within protein modification; peptidyl-diphthamide biosynthesis. NADH-dependent reductase for DPH3 and cytochrome b5. Required for the first step of diphthamide biosynthesis, a post-translational modification of histidine which occurs in elongation factor 2. DPH1 and DPH2 transfer a 3-amino-3-carboxypropyl (ACP) group from S-adenosyl-L-methionine (SAM) to a histidine residue, the reaction is assisted by a reduction system comprising DPH3 and a NADH-dependent reductase, predominantly MCR1.1. By reducing DPH3, also involved in the formation of the tRNA wobble base modification mcm5s 2U (5-methoxycarbonylmethyl-2-thiouridine), mediated by the elongator complex. The cytochrome b5/NADH cytochrome b5 reductase electron transfer system supports the catalytic activity of several sterol biosynthetic enzymes. The polypeptide is NADH-cytochrome b5 reductase 1 (MCR1.1) (Laccaria bicolor (strain S238N-H82 / ATCC MYA-4686) (Bicoloured deceiver)).